Reading from the N-terminus, the 1507-residue chain is DDB1- and CUL4-associated factor 1 (1507 aa).

Positions 141–500 are protein kinase-like; it reads QPLRTYSTGL…STLEILNLED (360 aa). Phosphoserine occurs at positions 202 and 255. The segment at 242–288 is disordered; the sequence is HLDSGHKTSSRVNSTTKPEDGGLKKNKSAKQGDRENFRKAKQKLGFS. One can recognise a Chromo domain in the interval 562–593; it reads SYTHEQIVEMMEFLIEYGPAQLYWEPAEVFLK. Position 701 is an N6-acetyllysine (lysine 701). The residue at position 828 (serine 828) is a Phosphoserine. The LisH domain maps to 846–878; that stretch reads PEKELLLLIRNHLISKGLGETATVLTKEADLPM. Threonine 888 carries the phosphothreonine modification. Serine 895 and serine 898 each carry phosphoserine. Positions 917–947 are disordered; that stretch reads AAVGASAPSAPTAHPQPRPPQGPLALPGPSY. Phosphoserine is present on residues serine 979 and serine 1000. WD repeat units follow at residues 1091–1130, 1133–1174, 1176–1213, 1215–1247, and 1248–1290; these read EDESGFTCCAFSARERFLMLGTCTGQLKLYNVFSGQEEAS, CHNS…DMKH, FTEDHYVEFSKHSQDRVIGTKGDIAHIYDIQTGNKLLT, FNPDLANNYKRNCATFNPTDDLVLNDGVLWDVR, and SAQA…LLHT. Residues 1091–1290 form a WD repeat-like region region; the sequence is EDESGFTCCA…DLRTFHLLHT (200 aa). 2 consecutive short sequence motifs (DWD box) follow at residues 1242–1249 and 1278–1285; these read VLWDVRSA and EIWDLRTF. Phosphoserine is present on serine 1328. Residues 1393–1507 form a disordered region; the sequence is RLAEDEDEEE…EDDIILSLNE (115 aa). 2 stretches are compositionally biased toward acidic residues: residues 1396-1483 and 1490-1501; these read EDED…EEVE and DSSDNSDLEDDI. The interaction with NF2 stretch occupies residues 1418-1507; the sequence is DDDTDDLDEL…EDDIILSLNE (90 aa).

The protein belongs to the VPRBP/DCAF1 family. As to quaternary structure, component of the DCX (DDB1-CUL4-X-box) E3 ubiquitin-protein ligase complex, named CUL4A-RBX1-DDB1-DCAF1/VPRBP complex. Interacts with DDB1; the interaction is direct. Also forms a ternary complex with DDA1 and DDB1. Interacts with NF2 (via FERM domain). Component of the EDVP complex, a E3 ligase complex containing DYRK2, EDD/UBR5, DDB1 and DCAF1. Interacts with DYRK2; the interaction is direct. Interacts with RAG1; the interaction is direct. Interacts with LLGL1 and LLGL2. Interacts with histone H3. Interacts with ESR1 and LATS1; probably recruited by LATS1 to promote ESR1 ubiquitination and ubiquitin-mediated proteasomal degradation. Directly interacts with TET1, TET2 and TET3 (via C-terminus). Interacts with CEP78; promoting DCAF1 localization to centrosomes. In terms of assembly, (Microbial infection) Interacts with HIV-1 virus Vpr protein; the interaction is direct. (Microbial infection) Interacts with HIV-2 virus Vpx protein; the interaction is direct and the complex recruits SAMHD1 to promote its ubiquitin-dependent proteasomal degradation. As to quaternary structure, (Microbial infection) Interacts (via C-terminus) with human cytomegalovirus protein UL35; this interaction induces the accumulation of cells in the G2 phase of the cell cycle. As to expression, ubiquitously expressed.

The protein resides in the cytoplasm. Its subcellular location is the nucleus. It is found in the cytoskeleton. It localises to the microtubule organizing center. The protein localises to the centrosome. The enzyme catalyses L-seryl-[protein] + ATP = O-phospho-L-seryl-[protein] + ADP + H(+). The catalysed reaction is L-threonyl-[protein] + ATP = O-phospho-L-threonyl-[protein] + ADP + H(+). It participates in protein modification; protein ubiquitination. Its function is as follows. Acts both as a substrate recognition component of E3 ubiquitin-protein ligase complexes and as an atypical serine/threonine-protein kinase, playing key roles in various processes such as cell cycle, telomerase regulation and histone modification. Probable substrate-specific adapter of a DCX (DDB1-CUL4-X-box) E3 ubiquitin-protein ligase complex, named CUL4A-RBX1-DDB1-DCAF1/VPRBP complex, which mediates ubiquitination and proteasome-dependent degradation of proteins such as NF2. Involved in the turnover of methylated proteins: recognizes and binds methylated proteins via its chromo domain, leading to ubiquitination of target proteins by the RBX1-DDB1-DCAF1/VPRBP complex. The CUL4A-RBX1-DDB1-DCAF1/VPRBP complex is also involved in B-cell development: DCAF1 is recruited by RAG1 to ubiquitinate proteins, leading to limit error-prone repair during V(D)J recombination. Also part of the EDVP complex, an E3 ligase complex that mediates ubiquitination of proteins such as TERT, leading to TERT degradation and telomerase inhibition. The EDVP complex also mediates ubiquitination and degradation of CCP110. Also acts as an atypical serine/threonine-protein kinase that specifically mediates phosphorylation of 'Thr-120' of histone H2A (H2AT120ph) in a nucleosomal context, thereby repressing transcription. H2AT120ph is present in the regulatory region of many tumor suppresor genes, down-regulates their transcription and is present at high level in a number of tumors. Involved in JNK-mediated apoptosis during cell competition process via its interaction with LLGL1 and LLGL2. By acting on TET dioxygenses, essential for oocyte maintenance at the primordial follicle stage, hence essential for female fertility. In terms of biological role, (Microbial infection) In case of infection by HIV-1 virus, it is recruited by HIV-1 Vpr in order to hijack the CUL4A-RBX1-DDB1-DCAF1/VPRBP function leading to arrest the cell cycle in G2 phase, and also to protect the viral protein from proteasomal degradation by another E3 ubiquitin ligase. The HIV-1 Vpr protein hijacks the CUL4A-RBX1-DDB1-DCAF1/VPRBP complex to promote ubiquitination and degradation of proteins such as TERT and ZIP/ZGPAT. Functionally, (Microbial infection) In case of infection by HIV-2 virus, it is recruited by HIV-2 Vpx in order to hijack the CUL4A-RBX1-DDB1-DCAF1/VPRBP function leading to enhanced efficiency of macrophage infection and promotion of the replication of cognate primate lentiviruses in cells of monocyte/macrophage lineage. This chain is DDB1- and CUL4-associated factor 1, found in Homo sapiens (Human).